We begin with the raw amino-acid sequence, 280 residues long: Formamidopyrimidine-DNA glycosylase (280 aa).

Proline 2 (schiff-base intermediate with DNA) is an active-site residue. Glutamate 3 functions as the Proton donor in the catalytic mechanism. Lysine 59 functions as the Proton donor; for beta-elimination activity in the catalytic mechanism. DNA is bound by residues histidine 92 and arginine 111. The FPG-type zinc-finger motif lies at 239–273 (NVYGQTGLPCNRCGTPIVKTKVAQRGTHYCPQCQQ). The active-site Proton donor; for delta-elimination activity is the arginine 263.

This sequence belongs to the FPG family. As to quaternary structure, monomer. The cofactor is Zn(2+).

The catalysed reaction is Hydrolysis of DNA containing ring-opened 7-methylguanine residues, releasing 2,6-diamino-4-hydroxy-5-(N-methyl)formamidopyrimidine.. It carries out the reaction 2'-deoxyribonucleotide-(2'-deoxyribose 5'-phosphate)-2'-deoxyribonucleotide-DNA = a 3'-end 2'-deoxyribonucleotide-(2,3-dehydro-2,3-deoxyribose 5'-phosphate)-DNA + a 5'-end 5'-phospho-2'-deoxyribonucleoside-DNA + H(+). Functionally, involved in base excision repair of DNA damaged by oxidation or by mutagenic agents. Acts as a DNA glycosylase that recognizes and removes damaged bases. Has a preference for oxidized purines, such as 7,8-dihydro-8-oxoguanine (8-oxoG). Has AP (apurinic/apyrimidinic) lyase activity and introduces nicks in the DNA strand. Cleaves the DNA backbone by beta-delta elimination to generate a single-strand break at the site of the removed base with both 3'- and 5'-phosphates. The chain is Formamidopyrimidine-DNA glycosylase from Enterococcus faecalis (strain ATCC 700802 / V583).